The primary structure comprises 932 residues: Transcriptional regulatory protein DagR (932 aa).

In terms of domain architecture, Sigma-54 factor interaction spans 111-343; it reads LIGYDRSLRD…LKSDIQFLCA (233 aa). Residues 141–148 and 210–219 contribute to the ATP site; these read GPSGVGKT and ADGGYLLLDE. Positions 462 to 567 constitute a PRD 1 domain; it reads RYGDQIEERV…KECRHYRQRI (106 aa). Position 497 is a phosphohistidine (H497). Residues 572–708 enclose the PTS EIIA type-4 domain; sequence DCGVILIAHG…PQQENGGKVL (137 aa). Catalysis depends on H580, which acts as the Tele-phosphohistidine intermediate. The PRD 2 domain occupies 835–932; it reads LNPQRILKEM…YFYIYELLYS (98 aa). The residue at position 870 (H870) is a Phosphohistidine.

Functionally, involved in the regulation of the catabolism of D-glucosaminate. This chain is Transcriptional regulatory protein DagR (dgaR), found in Salmonella typhimurium (strain 14028s / SGSC 2262).